Reading from the N-terminus, the 392-residue chain is 8-amino-7-oxononanoate synthase (392 aa).

Arginine 21 contacts substrate. Pyridoxal 5'-phosphate is bound at residue 108 to 109 (GF). Substrate is bound at residue histidine 133. Pyridoxal 5'-phosphate contacts are provided by residues serine 181, 206-209 (DDAH), and 237-240 (TLSK). Lysine 240 carries the post-translational modification N6-(pyridoxal phosphate)lysine. Residue threonine 354 coordinates substrate.

The protein belongs to the class-II pyridoxal-phosphate-dependent aminotransferase family. BioF subfamily. Homodimer. The cofactor is pyridoxal 5'-phosphate.

The enzyme catalyses 6-carboxyhexanoyl-[ACP] + L-alanine + H(+) = (8S)-8-amino-7-oxononanoate + holo-[ACP] + CO2. Its pathway is cofactor biosynthesis; biotin biosynthesis. Its function is as follows. Catalyzes the decarboxylative condensation of pimeloyl-[acyl-carrier protein] and L-alanine to produce 8-amino-7-oxononanoate (AON), [acyl-carrier protein], and carbon dioxide. This is 8-amino-7-oxononanoate synthase from Symbiobacterium thermophilum (strain DSM 24528 / JCM 14929 / IAM 14863 / T).